The primary structure comprises 516 residues: MLYRFWKTGLAIFMPGCILLSSCSFRSYIPTPSLRNTVGNHNSYVNNTVPKNNFYEKFYDLTFALNFTNQKTQEFGTGWLIDWKGDETKDLNTLTIASSSIISSVSNHSLKEKQDDKLFIAYIATNLHLIDGLKNDHDYQPYNKDGNGLSFPFDQKTQSFLLGRFANPKINSKPEEMNYQVQTRLKQDAMVFIQTSTLPKTAYAGIDPINFDYHETSDESGFWTKKQSTANFPRTRTLKSYADFAVLEVPLFLDNANDAKIYQEWIRPAVQAYKELGDVENIFAKTPYAEYINNTYYLLGYPVTNNNKYQFILGQDEKWKFSQQTSVLKHYQKQPLQQRTVYVERDDGLPTLTFNEDKLTHVQGTDLINVDQITDTNLGNGLINYAGLSRFTLSYHNVEYKLFGYGTILNNTNFPGGSSGSAVFNKEKQLTSIYFGSLINVTTGNNRNVNLGLGQILRTYNTNNSKHSAPSSYDLIFGDKNTIKFYAQFAKEKQTHLWNKIQTSVNSSISFYKDKK.

Residues 1–22 (MLYRFWKTGLAIFMPGCILLSS) form the signal peptide. Cys-23 carries the N-palmitoyl cysteine lipid modification. A lipid anchor (S-diacylglycerol cysteine) is attached at Cys-23.

The protein belongs to the MG067/MG068/MG395 family.

The protein resides in the cell membrane. This is an uncharacterized protein from Mycoplasma genitalium (strain ATCC 33530 / DSM 19775 / NCTC 10195 / G37) (Mycoplasmoides genitalium).